Here is a 583-residue protein sequence, read N- to C-terminus: MATFKVSRVETKPYDGQKPGTSGLRKKVKVFAQPHYLENFVQSTFDALTADKIKGKTLVVSGDGRYYSEQAIQTIIKMSAANGVKSVWVGQDGLLSTPAVSAVIRERVGKDGSKASGAFILTASHNPGGPNEDFGIKYNMENGGPAQEGVTNKIYENTTTIKEYLIAKELPNVNISKTGVTSFSGPDGQFDVEVFDATETYVKLMKSIFDFQAIKKLLSIPSFTFCYDALHGVAGVYAKRIFVDELGANESSLLNCTPKEDFGGGHPDPNLTYAKELVERMGLGKSNTQGEPPEFGAAADGDADRNMILGKRFFVTPSDSVAIIAANAVEAIPYFSGGLKGVARSMPTSAALDVVAKHLNLKFFEVPTGWKFFGNLMDAGVCSICGEESFGTGSDHVREKDGIWAVLAWLSILAHKNKDNLNGEKLVTVEDIVCQHWATYGRHYYTRYDYENVDAGGAKELMAYLVNLQSDLSKVNNIVKGVHSGVANVIAADEFEYKDPVDGSVSKHQGIRYMFEDGSRLIFRLSGTGSEGATIRLYIEQYEKDSSKTGRDSQEALKPLVDVALKLSKMQEFSGRSEPTVIT.

Positions 1-20 are disordered; the sequence is MATFKVSRVETKPYDGQKPG. Residues Arg25 and Ser124 each coordinate alpha-D-glucose 1,6-bisphosphate. The active-site Phosphoserine intermediate is the Ser124. Mg(2+) is bound by residues Ser124, Asp300, Asp302, and Asp304. A Phosphoserine modification is found at Ser124. Positions 304, 305, 368, 387, 389, and 400 each coordinate alpha-D-glucose 1,6-bisphosphate.

This sequence belongs to the phosphohexose mutase family. Monomer. It depends on Mg(2+) as a cofactor.

It is found in the cytoplasm. It catalyses the reaction alpha-D-glucose 1-phosphate = alpha-D-glucose 6-phosphate. It carries out the reaction O-phospho-L-seryl-[protein] + alpha-D-glucose 1-phosphate = alpha-D-glucose 1,6-bisphosphate + L-seryl-[protein]. The enzyme catalyses alpha-D-glucose 1,6-bisphosphate + L-seryl-[protein] = O-phospho-L-seryl-[protein] + alpha-D-glucose 6-phosphate. Functionally, catalyzes the reversible isomerization of alpha-D-glucose 1-phosphate to alpha-D-glucose 6-phosphate. The mechanism proceeds via the intermediate compound alpha-D-glucose 1,6-bisphosphate. This enzyme participates in both the breakdown and synthesis of glucose. This Mesembryanthemum crystallinum (Common ice plant) protein is Phosphoglucomutase, cytoplasmic (PGM1).